A 1058-amino-acid chain; its full sequence is Carbamoyl phosphate synthase large chain (1058 aa).

The carboxyphosphate synthetic domain stretch occupies residues 1–401 (MPKRTDIQKI…SLLKACRSLE (401 aa)). 12 residues coordinate ATP: arginine 129, arginine 169, glycine 175, glycine 176, arginine 208, isoleucine 210, glutamate 215, glycine 241, isoleucine 242, histidine 243, glutamine 284, and glutamate 298. In terms of domain architecture, ATP-grasp 1 spans 133-327 (KQLMEELEQP…IAKLAAKIAV (195 aa)). The Mg(2+) site is built by glutamine 284, glutamate 298, and asparagine 300. Glutamine 284, glutamate 298, and asparagine 300 together coordinate Mn(2+). The oligomerization domain stretch occupies residues 402–546 (IGVHHNEIPE…YSTYGWENES (145 aa)). Positions 547–929 (IRSDKESVLV…ALYKAFEASY (383 aa)) are carbamoyl phosphate synthetic domain. One can recognise an ATP-grasp 2 domain in the interval 671-861 (EQALKELDIP…MAQVATKLIL (191 aa)). ATP is bound by residues arginine 707, serine 746, isoleucine 748, glutamate 752, glycine 777, valine 778, histidine 779, serine 780, glutamine 820, and glutamate 832. Residues glutamine 820, glutamate 832, and asparagine 834 each contribute to the Mg(2+) site. The Mn(2+) site is built by glutamine 820, glutamate 832, and asparagine 834. In terms of domain architecture, MGS-like spans 930–1058 (LHLPTFGNVV…ESRSFVTEAI (129 aa)). The segment at 930–1058 (LHLPTFGNVV…ESRSFVTEAI (129 aa)) is allosteric domain.

The protein belongs to the CarB family. Composed of two chains; the small (or glutamine) chain promotes the hydrolysis of glutamine to ammonia, which is used by the large (or ammonia) chain to synthesize carbamoyl phosphate. Tetramer of heterodimers (alpha,beta)4. It depends on Mg(2+) as a cofactor. Mn(2+) is required as a cofactor.

It catalyses the reaction hydrogencarbonate + L-glutamine + 2 ATP + H2O = carbamoyl phosphate + L-glutamate + 2 ADP + phosphate + 2 H(+). It carries out the reaction hydrogencarbonate + NH4(+) + 2 ATP = carbamoyl phosphate + 2 ADP + phosphate + 2 H(+). Its pathway is amino-acid biosynthesis; L-arginine biosynthesis; carbamoyl phosphate from bicarbonate: step 1/1. It functions in the pathway pyrimidine metabolism; UMP biosynthesis via de novo pathway; (S)-dihydroorotate from bicarbonate: step 1/3. Its function is as follows. Large subunit of the glutamine-dependent carbamoyl phosphate synthetase (CPSase). CPSase catalyzes the formation of carbamoyl phosphate from the ammonia moiety of glutamine, carbonate, and phosphate donated by ATP, constituting the first step of 2 biosynthetic pathways, one leading to arginine and/or urea and the other to pyrimidine nucleotides. The large subunit (synthetase) binds the substrates ammonia (free or transferred from glutamine from the small subunit), hydrogencarbonate and ATP and carries out an ATP-coupled ligase reaction, activating hydrogencarbonate by forming carboxy phosphate which reacts with ammonia to form carbamoyl phosphate. This is Carbamoyl phosphate synthase large chain from Streptococcus pneumoniae (strain ATCC BAA-255 / R6).